We begin with the raw amino-acid sequence, 317 residues long: Membrane-associated protein VIPP1, chloroplastic (317 aa).

Residues 92-246 are a coiled coil; it reads EMNDDLTKMR…SQAEALGQLA (155 aa). The tract at residues 265-317 is disordered; it reads DLAQMKKEISGSSSKGELPPGRTAVSNSGAARPFRDIEIENELNELRKKANEY. Basic and acidic residues predominate over residues 297-317; sequence PFRDIEIENELNELRKKANEY.

Belongs to the PspA/Vipp/IM30 family. Homomultimer. Complex formation involves interaction via the central alpha-helical domain (71-286). As to quaternary structure, (Microbial infection) Interacts with the rice tungro bacilliform virus (RTBV) capsid protein.

It is found in the plastid. It localises to the chloroplast inner membrane. The protein localises to the chloroplast thylakoid membrane. Required for plastid vesicle formation and thylakoid membrane biogenesis, but not for functional assembly of thylakoid protein complexes. The sequence is that of Membrane-associated protein VIPP1, chloroplastic from Oryza sativa subsp. japonica (Rice).